The chain runs to 363 residues: Protein RecA (363 aa).

66-73 (GPESSGKT) contacts ATP. Residues 327-363 (YGIDEKSIADRENPEKIKEKREETSEENKTDNSEKTK) are disordered. A compositionally biased stretch (basic and acidic residues) spans 329–363 (IDEKSIADRENPEKIKEKREETSEENKTDNSEKTK).

It belongs to the RecA family.

It is found in the cytoplasm. Functionally, can catalyze the hydrolysis of ATP in the presence of single-stranded DNA, the ATP-dependent uptake of single-stranded DNA by duplex DNA, and the ATP-dependent hybridization of homologous single-stranded DNAs. It interacts with LexA causing its activation and leading to its autocatalytic cleavage. This chain is Protein RecA, found in Lactobacillus acidophilus (strain ATCC 700396 / NCK56 / N2 / NCFM).